A 64-amino-acid chain; its full sequence is Prokaryotic ubiquitin-like protein Pup (64 aa).

The segment at 1-38 (MAQEQTKRGGGGGEDDDPTGSTAAGQERREKLTEETDD) is disordered. The tract at residues 21–58 (STAAGQERREKLTEETDDLLDEIDDVLEENAEDFVRAY) is ARC ATPase binding. Positions 23 to 52 (AAGQERREKLTEETDDLLDEIDDVLEENAE) form a coiled coil. The residue at position 64 (glutamine 64) is a Deamidated glutamine. Glutamine 64 participates in a covalent cross-link: Isoglutamyl lysine isopeptide (Gln-Lys) (interchain with K-? in acceptor proteins).

Belongs to the prokaryotic ubiquitin-like protein family. As to quaternary structure, strongly interacts with the proteasome-associated ATPase ARC through a hydrophobic interface; the interacting region of Pup lies in its C-terminal half. There is one Pup binding site per ARC hexamer ring. Is modified by deamidation of its C-terminal glutamine to glutamate by the deamidase Dop, a prerequisite to the subsequent pupylation process.

Its pathway is protein degradation; proteasomal Pup-dependent pathway. Functionally, protein modifier that is covalently attached to lysine residues of substrate proteins, thereby targeting them for proteasomal degradation. The tagging system is termed pupylation. This Mycolicibacterium gilvum (strain PYR-GCK) (Mycobacterium gilvum (strain PYR-GCK)) protein is Prokaryotic ubiquitin-like protein Pup.